Consider the following 196-residue polypeptide: Leucyl/phenylalanyl-tRNA--protein transferase (196 aa).

This sequence belongs to the L/F-transferase family.

Its subcellular location is the cytoplasm. It catalyses the reaction N-terminal L-lysyl-[protein] + L-leucyl-tRNA(Leu) = N-terminal L-leucyl-L-lysyl-[protein] + tRNA(Leu) + H(+). The catalysed reaction is N-terminal L-arginyl-[protein] + L-leucyl-tRNA(Leu) = N-terminal L-leucyl-L-arginyl-[protein] + tRNA(Leu) + H(+). The enzyme catalyses L-phenylalanyl-tRNA(Phe) + an N-terminal L-alpha-aminoacyl-[protein] = an N-terminal L-phenylalanyl-L-alpha-aminoacyl-[protein] + tRNA(Phe). Functions in the N-end rule pathway of protein degradation where it conjugates Leu, Phe and, less efficiently, Met from aminoacyl-tRNAs to the N-termini of proteins containing an N-terminal arginine or lysine. The protein is Leucyl/phenylalanyl-tRNA--protein transferase of Thermosynechococcus vestitus (strain NIES-2133 / IAM M-273 / BP-1).